The sequence spans 156 residues: Small ribosomal subunit protein uS7 (156 aa).

It belongs to the universal ribosomal protein uS7 family. As to quaternary structure, part of the 30S ribosomal subunit. Contacts proteins S9 and S11.

One of the primary rRNA binding proteins, it binds directly to 16S rRNA where it nucleates assembly of the head domain of the 30S subunit. Is located at the subunit interface close to the decoding center, probably blocks exit of the E-site tRNA. This chain is Small ribosomal subunit protein uS7, found in Prochlorococcus marinus (strain NATL2A).